A 30-amino-acid chain; its full sequence is Cytochrome b6-f complex subunit 8 (30 aa).

Residues 4–24 (IISLGWGSLLAIFSFSIALVV) form a helical membrane-spanning segment.

This sequence belongs to the PetN family. In terms of assembly, the 4 large subunits of the cytochrome b6-f complex are cytochrome b6, subunit IV (17 kDa polypeptide, PetD), cytochrome f and the Rieske protein, while the 4 small subunits are PetG, PetL, PetM and PetN. The complex functions as a dimer.

It localises to the plastid. The protein localises to the chloroplast thylakoid membrane. Functionally, component of the cytochrome b6-f complex, which mediates electron transfer between photosystem II (PSII) and photosystem I (PSI), cyclic electron flow around PSI, and state transitions. The protein is Cytochrome b6-f complex subunit 8 of Gracilaria tenuistipitata var. liui (Red alga).